The primary structure comprises 423 residues: Methanol:N,N-dimethyl-4-nitrosoaniline oxidoreductase (423 aa).

The protein belongs to the iron-containing alcohol dehydrogenase family. In terms of assembly, homodecamer. Mg(2+) serves as cofactor. Requires Zn(2+) as cofactor. NADPH is required as a cofactor.

The catalysed reaction is methanol + A = formaldehyde + AH2. Catalyzes the oxidation of methanol to yield formaldehyde. While the in vivo electron acceptor is not known, N,N-dimethyl-4-nitrosoaniline (NDMA) can serve this function in vitro and is reduced to 4-(hydroxylamino)-N,N-dimethylaniline. The sequence is that of Methanol:N,N-dimethyl-4-nitrosoaniline oxidoreductase (thcE) from Rhodococcus erythropolis (Arthrobacter picolinophilus).